Here is a 378-residue protein sequence, read N- to C-terminus: Succinyl-diaminopimelate desuccinylase (378 aa).

Histidine 77 contacts Zn(2+). The active site involves aspartate 79. Aspartate 108 provides a ligand contact to Zn(2+). Glutamate 138 (proton acceptor) is an active-site residue. Zn(2+) is bound by residues glutamate 139, glutamate 167, and histidine 350.

Belongs to the peptidase M20A family. DapE subfamily. Homodimer. Requires Zn(2+) as cofactor. Co(2+) is required as a cofactor.

It catalyses the reaction N-succinyl-(2S,6S)-2,6-diaminopimelate + H2O = (2S,6S)-2,6-diaminopimelate + succinate. It functions in the pathway amino-acid biosynthesis; L-lysine biosynthesis via DAP pathway; LL-2,6-diaminopimelate from (S)-tetrahydrodipicolinate (succinylase route): step 3/3. Functionally, catalyzes the hydrolysis of N-succinyl-L,L-diaminopimelic acid (SDAP), forming succinate and LL-2,6-diaminopimelate (DAP), an intermediate involved in the bacterial biosynthesis of lysine and meso-diaminopimelic acid, an essential component of bacterial cell walls. This chain is Succinyl-diaminopimelate desuccinylase, found in Erythrobacter litoralis (strain HTCC2594).